A 336-amino-acid chain; its full sequence is Probable allantoicase (336 aa).

It belongs to the allantoicase family.

The catalysed reaction is allantoate + H2O = (S)-ureidoglycolate + urea. The protein operates within nitrogen metabolism; (S)-allantoin degradation; (S)-ureidoglycolate from allantoate (aminidohydrolase route): step 1/1. The chain is Probable allantoicase from Acinetobacter baumannii (strain SDF).